Consider the following 310-residue polypeptide: Probable GTP 3',8-cyclase (310 aa).

Residues 5-218 (KYGRSLQKLR…VNIIFELGGR (214 aa)) form the Radical SAM core domain. Arginine 14 is a binding site for GTP. [4Fe-4S] cluster is bound by residues cysteine 21, cysteine 25, and cysteine 28. A GTP-binding site is contributed by lysine 62. Glycine 66 serves as a coordination point for S-adenosyl-L-methionine. Threonine 91 contacts GTP. Serine 115 is a binding site for S-adenosyl-L-methionine. Lysine 153 is a GTP binding site. [4Fe-4S] cluster contacts are provided by cysteine 251, cysteine 254, and cysteine 268.

Belongs to the radical SAM superfamily. MoaA family. It depends on [4Fe-4S] cluster as a cofactor.

It catalyses the reaction GTP + AH2 + S-adenosyl-L-methionine = (8S)-3',8-cyclo-7,8-dihydroguanosine 5'-triphosphate + 5'-deoxyadenosine + L-methionine + A + H(+). The protein operates within cofactor biosynthesis; molybdopterin biosynthesis. Its function is as follows. Catalyzes the cyclization of GTP to (8S)-3',8-cyclo-7,8-dihydroguanosine 5'-triphosphate. The protein is Probable GTP 3',8-cyclase of Pyrobaculum aerophilum (strain ATCC 51768 / DSM 7523 / JCM 9630 / CIP 104966 / NBRC 100827 / IM2).